The sequence spans 83 residues: RNA-binding protein Hfq (83 aa).

Residues 10-70 form the Sm domain; it reads DAFLNQLRKE…ISTVSPSRPV (61 aa).

This sequence belongs to the Hfq family. Homohexamer.

RNA chaperone that binds small regulatory RNA (sRNAs) and mRNAs to facilitate mRNA translational regulation in response to envelope stress, environmental stress and changes in metabolite concentrations. Also binds with high specificity to tRNAs. The chain is RNA-binding protein Hfq from Desulforudis audaxviator (strain MP104C).